The following is a 460-amino-acid chain: Carboxypeptidase DacB (460 aa).

An N-terminal signal peptide occupies residues 1 to 28 (MRPTRWRRSTHVAVGVAVLALVVAVVAA). A disordered region spans residues 39–64 (AAEAVPPAPPPATADPGVVPVDLSAP). Catalysis depends on S113, which acts as the Acyl-ester intermediate. Residue K116 is the Proton acceptor of the active site. S294 is a catalytic residue.

It belongs to the peptidase S13 family.

Carboxypeptidase that cleaves terminal D-alanine from peptidoglycan in the mycobacterial cell wall. May cleave L-Lys-D-Ala and/or D-Ala-D-Ala peptide bonds. Exerts important effects on mycobacterial cell morphology and cell division. The sequence is that of Carboxypeptidase DacB from Mycolicibacterium smegmatis (strain ATCC 700084 / mc(2)155) (Mycobacterium smegmatis).